The chain runs to 498 residues: Pentatricopeptide repeat-containing protein At2g15980 (498 aa).

PPR repeat units follow at residues 244-274 (NATTFNSMMVSFYREGETEMVERIWREMEEE), 280-314 (NVYSYNVLMEAYCARGLMSEAEKVWEEMKVRGVVY), 315-349 (DIVAYNTMIGGLCSNFEVVKAKELFRDMGLKGIEC), 350-384 (TCLTYEHLVNGYCKAGDVDSGLVVYREMKRKGFEA), 385-423 (DGLTIEALVEGLCDDRDGQRVVEAADIVKDAVREAMFYP), 424-458 (SRNCYELLVKRLCEDGKMDRALNIQAEMVGKGFKP), and 459-489 (SQETYRAFIDGYGIVGDEETSALLAIEMAES).

This sequence belongs to the PPR family. P subfamily.

This Arabidopsis thaliana (Mouse-ear cress) protein is Pentatricopeptide repeat-containing protein At2g15980.